Reading from the N-terminus, the 188-residue chain is Inosine triphosphate pyrophosphatase (188 aa).

Residue 7-12 (TGNAGK) coordinates ITP. Glu-36 is a binding site for Mg(2+). ITP-binding positions include Lys-48, 64 to 65 (DT), Lys-81, 140 to 143 (FGWN), Lys-163, and 168 to 169 (HR).

The protein belongs to the HAM1 NTPase family. As to quaternary structure, homodimer. The cofactor is Mg(2+). Mn(2+) serves as cofactor.

It localises to the cytoplasm. The protein resides in the nucleus. It catalyses the reaction ITP + H2O = IMP + diphosphate + H(+). The enzyme catalyses dITP + H2O = dIMP + diphosphate + H(+). It carries out the reaction XTP + H2O = XMP + diphosphate + H(+). In terms of biological role, pyrophosphatase that hydrolyzes non-canonical purine nucleotides such as inosine triphosphate (ITP), deoxyinosine triphosphate (dITP) or xanthosine 5'-triphosphate (XTP) to their respective monophosphate derivatives. The enzyme does not distinguish between the deoxy- and ribose forms. Probably excludes non-canonical purines from RNA and DNA precursor pools, thus preventing their incorporation into RNA and DNA and avoiding chromosomal lesions. The sequence is that of Inosine triphosphate pyrophosphatase from Yarrowia lipolytica (strain CLIB 122 / E 150) (Yeast).